The sequence spans 954 residues: Glycine dehydrogenase (decarboxylating) (954 aa).

N6-(pyridoxal phosphate)lysine is present on Lys-704.

The protein belongs to the GcvP family. The glycine cleavage system is composed of four proteins: P, T, L and H. Pyridoxal 5'-phosphate serves as cofactor.

It carries out the reaction N(6)-[(R)-lipoyl]-L-lysyl-[glycine-cleavage complex H protein] + glycine + H(+) = N(6)-[(R)-S(8)-aminomethyldihydrolipoyl]-L-lysyl-[glycine-cleavage complex H protein] + CO2. Functionally, the glycine cleavage system catalyzes the degradation of glycine. The P protein binds the alpha-amino group of glycine through its pyridoxal phosphate cofactor; CO(2) is released and the remaining methylamine moiety is then transferred to the lipoamide cofactor of the H protein. The polypeptide is Glycine dehydrogenase (decarboxylating) (Vibrio parahaemolyticus serotype O3:K6 (strain RIMD 2210633)).